The following is a 308-amino-acid chain: D-alanine--D-alanine ligase B (308 aa).

The ATP-grasp domain maps to 102–302 (KKIVKTVGVP…FGELLSWMVE (201 aa)). Residue 128–183 (PMKPPYVIKPVNEGSSFGVVIVSEGQSHPPQVVGSSEWKYGDTVMVERYIHGRELT) coordinates ATP. 3 residues coordinate Mg(2+): aspartate 252, glutamate 269, and asparagine 271.

This sequence belongs to the D-alanine--D-alanine ligase family. The cofactor is Mg(2+). Requires Mn(2+) as cofactor.

It localises to the cytoplasm. The catalysed reaction is 2 D-alanine + ATP = D-alanyl-D-alanine + ADP + phosphate + H(+). Its pathway is cell wall biogenesis; peptidoglycan biosynthesis. Cell wall formation. In Mesorhizobium japonicum (strain LMG 29417 / CECT 9101 / MAFF 303099) (Mesorhizobium loti (strain MAFF 303099)), this protein is D-alanine--D-alanine ligase B.